A 130-amino-acid polypeptide reads, in one-letter code: Probable 15 kDa heat shock protein (130 aa).

Positions glutamate 21 to glutamate 130 constitute a sHSP domain.

The protein belongs to the small heat shock protein (HSP20) family.

This is Probable 15 kDa heat shock protein (hsp15) from Leptospira interrogans serogroup Icterohaemorrhagiae serovar Lai (strain 56601).